The chain runs to 230 residues: Ribonuclease 3 (230 aa).

Residues 5-125 (YSRFYNILGY…VIGAIYLDSD (121 aa)) form the RNase III domain. Glutamate 40 is a Mg(2+) binding site. Aspartate 44 is a catalytic residue. The Mg(2+) site is built by aspartate 111 and glutamate 114. Residue glutamate 114 is part of the active site. One can recognise a DRBM domain in the interval 153–223 (DSKSKLQEIL…AEKMIEMLSQ (71 aa)).

It belongs to the ribonuclease III family. Homodimer. The cofactor is Mg(2+).

The protein resides in the cytoplasm. It catalyses the reaction Endonucleolytic cleavage to 5'-phosphomonoester.. Functionally, digests double-stranded RNA. Involved in the processing of primary rRNA transcript to yield the immediate precursors to the large and small rRNAs (23S and 16S). Processes some mRNAs, and tRNAs when they are encoded in the rRNA operon. Processes pre-crRNA and tracrRNA of type II CRISPR loci if present in the organism. This is Ribonuclease 3 from Francisella tularensis subsp. holarctica (strain LVS).